We begin with the raw amino-acid sequence, 261 residues long: NAD kinase (261 aa).

Aspartate 54 serves as the catalytic Proton acceptor. Residues 54-55 (DG), 123-124 (ND), arginine 150, aspartate 152, and 163-168 (TAYSLS) each bind NAD(+).

Belongs to the NAD kinase family. A divalent metal cation serves as cofactor.

Its subcellular location is the cytoplasm. It catalyses the reaction NAD(+) + ATP = ADP + NADP(+) + H(+). Involved in the regulation of the intracellular balance of NAD and NADP, and is a key enzyme in the biosynthesis of NADP. Catalyzes specifically the phosphorylation on 2'-hydroxyl of the adenosine moiety of NAD to yield NADP. This Caldicellulosiruptor bescii (strain ATCC BAA-1888 / DSM 6725 / KCTC 15123 / Z-1320) (Anaerocellum thermophilum) protein is NAD kinase.